The following is a 185-amino-acid chain: Ribosome-recycling factor (185 aa).

The segment at 143 to 163 is disordered; sequence RKDGEAGEDEVARAEKDLDKS.

This sequence belongs to the RRF family.

Its subcellular location is the cytoplasm. Its function is as follows. Responsible for the release of ribosomes from messenger RNA at the termination of protein biosynthesis. May increase the efficiency of translation by recycling ribosomes from one round of translation to another. This Mycobacterium ulcerans (strain Agy99) protein is Ribosome-recycling factor.